Reading from the N-terminus, the 307-residue chain is 2,4-diacetylphloroglucinol hydrolase (307 aa).

Zn(2+) is bound by residues His142, Glu173, His283, and Glu287.

This sequence belongs to the DAPG/phloretin hydrolase family. Zn(2+) is required as a cofactor.

The enzyme catalyses 2,4-diacetylphloroglucinol + H2O = 2-acetylphloroglucinol + acetate. Activity is strongly reduced by pyoluteorin, an antifungal compound produced by the bacterium. Hydrolase that specifically degrades the potent antimicrobial compound 2,4-diacetylphloroglucinol (DAPG) to equimolar amounts of mildly toxic monoacetylphloroglucinol (MAPG) and acetate. Does not degrade other compounds with structures similar to DAPG, such as MAPG and triacetylphloroglucinol, suggesting strict substrate specificity. Degradation of DAPG to MAPG may provide an additional means of fine-tuning levels of this antibiotic or may help avoid accumulation of a metabolite that at high levels may become toxic to the producing bacterium. This chain is 2,4-diacetylphloroglucinol hydrolase, found in Pseudomonas protegens (strain DSM 19095 / LMG 27888 / CFBP 6595 / CHA0).